The sequence spans 387 residues: Exodeoxyribonuclease 7 large subunit (387 aa).

The protein belongs to the XseA family. In terms of assembly, heterooligomer composed of large and small subunits.

It is found in the cytoplasm. The catalysed reaction is Exonucleolytic cleavage in either 5'- to 3'- or 3'- to 5'-direction to yield nucleoside 5'-phosphates.. In terms of biological role, bidirectionally degrades single-stranded DNA into large acid-insoluble oligonucleotides, which are then degraded further into small acid-soluble oligonucleotides. The protein is Exodeoxyribonuclease 7 large subunit of Campylobacter jejuni (strain RM1221).